A 1023-amino-acid chain; its full sequence is 2-oxoglutarate dehydrogenase complex component E1 (1023 aa).

The N-terminal 40 residues, 1–40 (MFHLRTCAAKLRPLTASQTVKTFSQNRPAAARTFQQIRCY), are a transit peptide targeting the mitochondrion. An N6-succinyllysine modification is found at Lys74. A Phosphoserine modification is found at Ser100. Residues His143, Asp156, and Asp158 each contribute to the Ca(2+) site. Thiamine diphosphate is bound at residue Arg312. At Lys401 the chain carries N6-acetyllysine. 3 residues coordinate thiamine diphosphate: Asp411, Asn444, and Ile446. 3 residues coordinate Mg(2+): Asp411, Asn444, and Ile446. Residue Lys534 forms a Glycyl lysine isopeptide (Lys-Gly) (interchain with G-Cter in ubiquitin) linkage. Lys564 bears the N6-succinyllysine mark. Thiamine diphosphate is bound at residue Gln676. Lys970 carries the post-translational modification N6-acetyllysine.

It belongs to the alpha-ketoglutarate dehydrogenase family. As to quaternary structure, homodimer. The 2-oxoglutarate dehydrogenase complex is composed of OGDH (2-oxoglutarate dehydrogenase; E1), DLST (dihydrolipoamide succinyltransferase; E2), DLD (dihydrolipoamide dehydrogenase; E3) and the assembly factor KGD4. It contains multiple copies of the three enzymatic components (E1, E2 and E3). In the nucleus, the 2-oxoglutarate dehydrogenase complex associates with KAT2A. Interacts with ABHD11; this interaction maintains the functional lipoylation of the 2-oxoglutarate dehydrogenase complex. The cofactor is thiamine diphosphate. It depends on Mg(2+) as a cofactor.

The protein resides in the mitochondrion. It localises to the nucleus. It carries out the reaction N(6)-[(R)-lipoyl]-L-lysyl-[protein] + 2-oxoglutarate + H(+) = N(6)-[(R)-S(8)-succinyldihydrolipoyl]-L-lysyl-[protein] + CO2. Calcium ions and ADP stimulate, whereas ATP and NADH reduce catalytic activity. Functionally, 2-oxoglutarate dehydrogenase (E1o) component of the 2-oxoglutarate dehydrogenase complex (OGDHC). Participates in the first step, rate limiting for the overall conversion of 2-oxoglutarate to succinyl-CoA and CO(2) catalyzed by the whole OGDHC. Catalyzes the irreversible decarboxylation of 2-oxoglutarate (alpha-ketoglutarate) via the thiamine diphosphate (ThDP) cofactor and subsequent transfer of the decarboxylated acyl intermediate on an oxidized dihydrolipoyl group that is covalently amidated to the E2 enzyme (dihydrolipoyllysine-residue succinyltransferase or DLST). Plays a key role in the Krebs (citric acid) cycle, which is a common pathway for oxidation of fuel molecules, including carbohydrates, fatty acids, and amino acids. Can catalyze the decarboxylation of 2-oxoadipate in vitro, but at a much lower rate than 2-oxoglutarate. Mainly active in the mitochondrion. A fraction of the 2-oxoglutarate dehydrogenase complex also localizes in the nucleus and is required for lysine succinylation of histones: associates with KAT2A on chromatin and provides succinyl-CoA to histone succinyltransferase KAT2A. The protein is 2-oxoglutarate dehydrogenase complex component E1 of Macaca fascicularis (Crab-eating macaque).